Reading from the N-terminus, the 466-residue chain is Ribulose bisphosphate carboxylase large chain (466 aa).

Position 5 is an N6,N6,N6-trimethyllysine (Lys-5). Residues Asn-114 and Thr-164 each coordinate substrate. Lys-166 serves as the catalytic Proton acceptor. Lys-168 contacts substrate. 3 residues coordinate Mg(2+): Lys-192, Asp-194, and Glu-195. Lys-192 carries the post-translational modification N6-carboxylysine. Residue His-285 is the Proton acceptor of the active site. 3 residues coordinate substrate: Arg-286, His-318, and Ser-370.

It belongs to the RuBisCO large chain family. Type I subfamily. In terms of assembly, heterohexadecamer of 8 large chains and 8 small chains; disulfide-linked. The disulfide link is formed within the large subunit homodimers. It depends on Mg(2+) as a cofactor. The disulfide bond which can form in the large chain dimeric partners within the hexadecamer appears to be associated with oxidative stress and protein turnover.

The protein resides in the plastid. Its subcellular location is the chloroplast. It carries out the reaction 2 (2R)-3-phosphoglycerate + 2 H(+) = D-ribulose 1,5-bisphosphate + CO2 + H2O. The catalysed reaction is D-ribulose 1,5-bisphosphate + O2 = 2-phosphoglycolate + (2R)-3-phosphoglycerate + 2 H(+). RuBisCO catalyzes two reactions: the carboxylation of D-ribulose 1,5-bisphosphate, the primary event in carbon dioxide fixation, as well as the oxidative fragmentation of the pentose substrate in the photorespiration process. Both reactions occur simultaneously and in competition at the same active site. This is Ribulose bisphosphate carboxylase large chain from Drosera binata (Fork-leaved sundew).